The chain runs to 68 residues: Large ribosomal subunit protein uL29 (68 aa).

It belongs to the universal ribosomal protein uL29 family.

The protein is Large ribosomal subunit protein uL29 of Geobacillus sp. (strain WCH70).